The chain runs to 985 residues: Cation channel sperm-associated auxiliary subunit epsilon (985 aa).

The N-terminal stretch at 1–35 (MPSAGQRKPGSLLALQALQKWLLRGGVGAMLARQV) is a signal peptide. At 36-937 (VAALLLWLSC…ESLGMIPRSS (902 aa)) the chain is on the extracellular side. Cystine bridges form between C87–C101, C130–C235, C275–C365, and C439–C442. N91, N143, and N292 each carry an N-linked (GlcNAc...) asparagine glycan. N-linked (GlcNAc...) asparagine glycosylation is found at N502, N517, and N565. 4 cysteine pairs are disulfide-bonded: C617–C724, C737–C919, C753–C786, and C838–C869. Residue N749 is glycosylated (N-linked (GlcNAc...) asparagine). N830 carries an N-linked (GlcNAc...) asparagine glycan. N-linked (GlcNAc...) asparagine glycans are attached at residues N888, N915, and N920. A helical membrane pass occupies residues 938-958 (VYLVAALIFVLMLTFISILVL). The Cytoplasmic portion of the chain corresponds to 959 to 985 (SYFWYLKIYRQFIIEPLHKRPAKQKKN).

Belongs to the CATSPERD family. Component of the CatSper complex or CatSpermasome composed of the core pore-forming members CATSPER1, CATSPER2, CATSPER3 and CATSPER4 as well as auxiliary members CATSPERB, CATSPERG2, CATSPERD, CATSPERE, CATSPERZ, C2CD6/CATSPERT, SLCO6C1, TMEM249, TMEM262 and EFCAB9. HSPA1 may be an additional auxiliary complex member. The core complex members CATSPER1, CATSPER2, CATSPER3 and CATSPER4 form a heterotetrameric channel. The auxiliary CATSPERB, CATSPERG2, CATSPERD and CATSPERE subunits form a pavilion-like structure over the pore which stabilizes the complex through interactions with CATSPER4, CATSPER3, CATSPER1 and CATSPER2 respectively. SLCO6C1 interacts with CATSPERE and TMEM262/CATSPERH interacts with CATSPERB, further stabilizing the complex. C2CD6/CATSPERT interacts at least with CATSPERD and is required for targeting the CatSper complex in the flagellar membrane. As to expression, testis-specific.

The protein localises to the cell projection. Its subcellular location is the cilium. It localises to the flagellum membrane. Auxiliary component of the CatSper complex, a complex involved in sperm cell hyperactivation. Sperm cell hyperactivation is needed for sperm motility which is essential late in the preparation of sperm for fertilization. This is Cation channel sperm-associated auxiliary subunit epsilon from Mus musculus (Mouse).